We begin with the raw amino-acid sequence, 191 residues long: Molybdenum cofactor guanylyltransferase (191 aa).

GTP-binding positions include 13–15 (LAG), K26, D72, and D102. Mg(2+) is bound at residue D102.

The protein belongs to the MobA family. As to quaternary structure, monomer. The cofactor is Mg(2+).

The protein localises to the cytoplasm. The catalysed reaction is Mo-molybdopterin + GTP + H(+) = Mo-molybdopterin guanine dinucleotide + diphosphate. In terms of biological role, transfers a GMP moiety from GTP to Mo-molybdopterin (Mo-MPT) cofactor (Moco or molybdenum cofactor) to form Mo-molybdopterin guanine dinucleotide (Mo-MGD) cofactor. The protein is Molybdenum cofactor guanylyltransferase of Pseudomonas putida (strain ATCC 700007 / DSM 6899 / JCM 31910 / BCRC 17059 / LMG 24140 / F1).